The primary structure comprises 419 residues: L-rhamnose isomerase (419 aa).

Residues histidine 262, aspartate 294, and aspartate 296 each coordinate Mn(2+).

This sequence belongs to the rhamnose isomerase family. As to quaternary structure, homotetramer. Requires Mn(2+) as cofactor.

The protein localises to the cytoplasm. The enzyme catalyses L-rhamnopyranose = L-rhamnulose. It participates in carbohydrate degradation; L-rhamnose degradation; glycerone phosphate from L-rhamnose: step 1/3. In terms of biological role, catalyzes the interconversion of L-rhamnose and L-rhamnulose. The sequence is that of L-rhamnose isomerase from Escherichia coli O7:K1 (strain IAI39 / ExPEC).